A 122-amino-acid polypeptide reads, in one-letter code: Small ribosomal subunit protein uS13 (122 aa).

The tract at residues 95 to 122 (GLPVRGQKTKTNARTRKGPKRTVANKKK) is disordered.

This sequence belongs to the universal ribosomal protein uS13 family. In terms of assembly, part of the 30S ribosomal subunit. Forms a loose heterodimer with protein S19. Forms two bridges to the 50S subunit in the 70S ribosome.

In terms of biological role, located at the top of the head of the 30S subunit, it contacts several helices of the 16S rRNA. In the 70S ribosome it contacts the 23S rRNA (bridge B1a) and protein L5 of the 50S subunit (bridge B1b), connecting the 2 subunits; these bridges are implicated in subunit movement. Contacts the tRNAs in the A and P-sites. The polypeptide is Small ribosomal subunit protein uS13 (Lachnoclostridium phytofermentans (strain ATCC 700394 / DSM 18823 / ISDg) (Clostridium phytofermentans)).